A 154-amino-acid polypeptide reads, in one-letter code: Hydroperoxy fatty acid reductase Gpx2 (154 aa).

Cysteine 34 is a catalytic residue.

It belongs to the glutathione peroxidase family. In terms of assembly, monomer.

It catalyses the reaction a hydroperoxy polyunsaturated fatty acid + NADPH + H(+) = a hydroxy polyunsaturated fatty acid + NADP(+) + H2O. With respect to regulation, mercaptosuccinate, pCMB, and nethylmaleimide act as inhibitors of the catalytic activity. Its function is as follows. Hydroperoxy fatty acid reductase essential for the removal of lipid hydroperoxides under normal and stress conditions, leading to the protection of membrane integrity. The chain is Hydroperoxy fatty acid reductase Gpx2 (gpx2) from Synechocystis sp. (strain ATCC 27184 / PCC 6803 / Kazusa).